A 1023-amino-acid polypeptide reads, in one-letter code: Phosphoenolpyruvate carboxylase (1023 aa).

Active-site residues include H199 and K669.

The protein belongs to the PEPCase type 1 family. Requires Mg(2+) as cofactor.

The enzyme catalyses oxaloacetate + phosphate = phosphoenolpyruvate + hydrogencarbonate. Its function is as follows. Forms oxaloacetate, a four-carbon dicarboxylic acid source for the tricarboxylic acid cycle. The chain is Phosphoenolpyruvate carboxylase from Trichormus variabilis (strain ATCC 29413 / PCC 7937) (Anabaena variabilis).